The chain runs to 89 residues: MVKIRLRRTGKTKQPSYRIVVADSRSPRDGKFIETIGYYLPTRQPKVLEIKADRARYWLGVGAQPTEVVVKLLKRVNVLDEQGKVIAEA.

Belongs to the bacterial ribosomal protein bS16 family.

The polypeptide is Small ribosomal subunit protein bS16 (Chloroflexus aurantiacus (strain ATCC 29364 / DSM 637 / Y-400-fl)).